Here is a 25-residue protein sequence, read N- to C-terminus: Cytochrome c oxidase subunit 1 (25 aa).

The protein belongs to the heme-copper respiratory oxidase family. It depends on Cu(2+) as a cofactor. The cofactor is heme.

It localises to the cell inner membrane. The enzyme catalyses 4 Fe(II)-[cytochrome c] + O2 + 8 H(+)(in) = 4 Fe(III)-[cytochrome c] + 2 H2O + 4 H(+)(out). Its pathway is energy metabolism; oxidative phosphorylation. Its function is as follows. Subunit I and II form the functional core of the enzyme complex. Electrons originating in cytochrome c are transferred via heme a and Cu(A) to the binuclear center formed by heme a3 and Cu(B). This cytochrome c oxidase shows proton pump activity across the membrane in addition to the electron transfer. The polypeptide is Cytochrome c oxidase subunit 1 (ctaD) (Paracoccus versutus (Thiobacillus versutus)).